Consider the following 79-residue polypeptide: ATP synthase subunit c (79 aa).

The next 2 helical transmembrane spans lie at 11 to 31 and 53 to 73; these read MAAAVMMGLAAIGAAIGIGIL and FFIVMGLVDAIPMIAVGLGLY.

This sequence belongs to the ATPase C chain family. F-type ATPases have 2 components, F(1) - the catalytic core - and F(0) - the membrane proton channel. F(1) has five subunits: alpha(3), beta(3), gamma(1), delta(1), epsilon(1). F(0) has three main subunits: a(1), b(2) and c(10-14). The alpha and beta chains form an alternating ring which encloses part of the gamma chain. F(1) is attached to F(0) by a central stalk formed by the gamma and epsilon chains, while a peripheral stalk is formed by the delta and b chains.

It is found in the cell inner membrane. F(1)F(0) ATP synthase produces ATP from ADP in the presence of a proton or sodium gradient. F-type ATPases consist of two structural domains, F(1) containing the extramembraneous catalytic core and F(0) containing the membrane proton channel, linked together by a central stalk and a peripheral stalk. During catalysis, ATP synthesis in the catalytic domain of F(1) is coupled via a rotary mechanism of the central stalk subunits to proton translocation. In terms of biological role, key component of the F(0) channel; it plays a direct role in translocation across the membrane. A homomeric c-ring of between 10-14 subunits forms the central stalk rotor element with the F(1) delta and epsilon subunits. The chain is ATP synthase subunit c from Citrobacter koseri (strain ATCC BAA-895 / CDC 4225-83 / SGSC4696).